A 643-amino-acid polypeptide reads, in one-letter code: MNASVEGDTFSGSMQIPGGTTVLVELAPDIHICGLCKQHFSNLDAFVAHKQSGCQLTTTPVTAPSTVQFVAEETEPATQTTTTTISSETQTITVSAPEFVFEHGYQTYLPTESTDNQTATVISLPTKSRTKKPTAPPAQKRLGCCYPGCQFKTAYGMKDMERHLKIHTGDKPHKCEVCGKCFSRKDKLKTHMRCHTGVKPYKCKTCDYAAADSSSLNKHLRIHSDERPFKCQICPYASRNSSQLTVHLRSHTASVLENDVQKPAGLPAEESDAQQAPAVTLSLEAKERTATLGERTFNCRYPGCHFKTVHGMKDLDRHLRIHTGDKPHKCEFCDKCFSRKDNLTMHMRCHTSVKPHKCHLCDYAAVDSSSLKKHLRIHSDERPYKCQLCPYASRNSSQLTVHLRSHTGDTPFQCWLCSAKFKISSDLKRHMIVHSGEKPFKCEFCDVRCTMKANLKSHIRIKHTFKCLHCAFQGRDRADLLEHSRLHQADHPEKCPECSYSCSNPAALRVHSRVHCTDRPFKCDFCSFDTKRPSSLAKHIDKVHREGAKTENRAPPGKDGPGESGPHHVPNVSTQRAFGCDKCGASFVRDDSLRCHRKQHSDWGENKNSNLVTFPSEGIATGQLGPLVSVGQLESTLEPSHDL.

C2H2-type zinc fingers lie at residues 173–195 (HKCE…MRCH), 201–223 (YKCK…LRIH), 229–251 (FKCQ…LRSH), 297–322 (FNCR…LRIH), 328–350 (HKCE…MRCH), 356–378 (HKCH…LRIH), 384–406 (YKCQ…LRSH), 412–434 (FQCW…MIVH), 440–463 (FKCE…RIKH), 465–487 (FKCL…SRLH), and 493–515 (EKCP…SRVH). The Zn(2+) site is built by C495, C498, H511, H515, C523, C526, H539, and H544. Positions 538 to 552 (KHIDKVHREGAKTEN) are enriched in basic and acidic residues. Positions 538-571 (KHIDKVHREGAKTENRAPPGKDGPGESGPHHVPN) are disordered. A C2H2-type 12 zinc finger spans residues 578-600 (FGCDKCGASFVRDDSLRCHRKQH).

Belongs to the krueppel C2H2-type zinc-finger protein family. In terms of assembly, interacts with NOTCH1. As to expression, widely expressed. Expressed in the brain, spleen, liver, and heart.

Its subcellular location is the nucleus. In terms of biological role, may be involved in the regulation of mesenchymal cell differentiation through transactivation of NOTCH1 target genes. The sequence is that of Zinc finger protein 64 from Mus musculus (Mouse).